The primary structure comprises 361 residues: MSSLPVSESEGEGSGTSVQVPSRGGQVTPGEKAFSLRTKHVFLTYPRCPISPEEAGQKIADRLKNKKCNYIYISREFHADGEPHLHAFVQLEANFRTTSPKYFDLDEFHPNIQAARQPASTLKYCMKHPESSWEFGKFLKPKVNRSPTQSASRDKTMKQIMANATSRDEYLSMVRKSFPFEWAVRLQQFQYSANALFPDPPQTYSAPYASRDMSDHPVIGEWLQQELYTWSPGVRRRSLYICGPTRTGKTSWARSLGTHHYWQHSVNFLEEWNCQAQFNIIDDIPFKFVPCWKGLVGSQYDLTVNPKYGKKKRIPNGIPCIILVNEDEDWLQSMSTQQVDWFHGNAVVYHLLPGETFIPSE.

Positions 1–31 are disordered; sequence MSSLPVSESEGEGSGTSVQVPSRGGQVTPGE. The region spanning 35-138 is the CRESS-DNA virus Rep endonuclease domain; the sequence is SLRTKHVFLT…PESSWEFGKF (104 aa). Positions 42–45 match the RCR-1 motif; the sequence is FLTY. 3 residues coordinate a divalent metal cation: Glu-76, His-84, and His-86. Residues 84-86 carry the RCR-2 motif; sequence HLH. Tyr-124 serves as the catalytic For DNA cleavage activity. Positions 124–127 match the RCR-3 motif; that stretch reads YCMK. An oligomerization region spans residues 192-204; that stretch reads SANALFPDPPQTY. Residue 243-250 coordinates ATP; that stretch reads GPTRTGKT. The tract at residues 266-285 is transactivation; sequence VNFLEEWNCQAQFNIIDDIP. The short motif at 307 to 317 is the Nuclear localization signal element; the sequence is KYGKKKRIPNG.

The protein belongs to the geminiviridae Rep protein family. In terms of assembly, homooligomer. Rep binds to repeated DNA motifs (iterons). Forms the O-complex, which is a Rep-DNA complex involved in the initiation of RCR. Part of the C- and V-complexes which are RepA-Rep-DNA complexes involved in the c-sense and v-sense transcription. Mg(2+) is required as a cofactor. Mn(2+) serves as cofactor.

The protein localises to the host nucleus. In terms of biological role, essential for the replication of viral ssDNA. The closed circular ssDNA genome is first converted to a superhelical dsDNA. Rep binds a specific region at the genome origin of replication. It introduces an endonucleolytic nick within the conserved sequence 5'-TAATATTAC-3' in the intergenic region of the genome present in all geminiviruses, thereby initiating the rolling circle replication (RCR). Following cleavage, binds covalently to the 5'-phosphate of DNA as a tyrosyl ester. The cleavage gives rise to a free 3'-OH that serves as a primer for the cellular DNA polymerase. The polymerase synthesizes the (+) strand DNA by rolling circle mechanism. After one round of replication, a Rep-catalyzed nucleotidyl transfer reaction releases a circular single-stranded virus genome, thereby terminating the replication. Displays origin-specific DNA cleavage, nucleotidyl transferase, ATPase and helicase activities. Acts as an inhibitor of C-sense gene transcription. The sequence is that of Replication-associated protein from Avena sativa (Oat).